We begin with the raw amino-acid sequence, 372 residues long: Phospho-N-acetylmuramoyl-pentapeptide-transferase (372 aa).

Helical transmembrane passes span serine 21 to glycine 41, threonine 71 to alanine 91, valine 98 to leucine 118, tyrosine 134 to leucine 154, methionine 176 to isoleucine 196, glycine 211 to serine 231, valine 251 to histidine 271, valine 275 to methionine 295, isoleucine 300 to valine 320, and glutamine 349 to leucine 369.

This sequence belongs to the glycosyltransferase 4 family. MraY subfamily. It depends on Mg(2+) as a cofactor.

It localises to the cell inner membrane. It carries out the reaction UDP-N-acetyl-alpha-D-muramoyl-L-alanyl-gamma-D-glutamyl-meso-2,6-diaminopimeloyl-D-alanyl-D-alanine + di-trans,octa-cis-undecaprenyl phosphate = di-trans,octa-cis-undecaprenyl diphospho-N-acetyl-alpha-D-muramoyl-L-alanyl-D-glutamyl-meso-2,6-diaminopimeloyl-D-alanyl-D-alanine + UMP. It functions in the pathway cell wall biogenesis; peptidoglycan biosynthesis. Its function is as follows. Catalyzes the initial step of the lipid cycle reactions in the biosynthesis of the cell wall peptidoglycan: transfers peptidoglycan precursor phospho-MurNAc-pentapeptide from UDP-MurNAc-pentapeptide onto the lipid carrier undecaprenyl phosphate, yielding undecaprenyl-pyrophosphoryl-MurNAc-pentapeptide, known as lipid I. The polypeptide is Phospho-N-acetylmuramoyl-pentapeptide-transferase (Psychrobacter arcticus (strain DSM 17307 / VKM B-2377 / 273-4)).